Consider the following 50-residue polypeptide: Thrombin-like enzyme BpirSP41 (50 aa).

A Peptidase S1 domain is found at 1-50; that stretch reads VVGGDECDINEHPFLAFLYSHGYFCGLTLINQEWVLTAAHCDRRFMRIYL. A disulfide bridge links cysteine 25 with cysteine 41. The active-site Charge relay system is the histidine 40.

The protein belongs to the peptidase S1 family. Snake venom subfamily. As to quaternary structure, monomer. N-glycosylated. Expressed by the venom gland.

It localises to the secreted. Inhibited by serine protease inhibitors PMSF, benzamidine, leupeptin and aprotinin, as well as by copper ions (Cu2+). Not inhibited by metalloprotease inhibitors EDTA, EGTA and 1,10-phenanthroline, as well as by barium (Ba2+) and calcium ion (Ca2+). Its function is as follows. Snake venom serine protease that interferes with the hemostatic system of the prey. It almost completely degrades both Aalpha (FGA) and Bbeta (FGB) chains of fibrinogen. It presents a higher ability to degrade fibrin clots than BpirSP27. It hydrolyzes chromogenic substrates S-2238 (used for testing thrombin activity), S-2222 (factor Xa), S-2266 (glandular kallikrein and factor XIa), and S-2302 (plasma kallikrein, factor XIa and XIIa). It shows a decrease in the clotting time of human plasma in the presence of increasing doses of the enzyme. Its minimum coagulant dose (MCD) is 20 ug. It promotes platelet aggregation with a maximum of aggregation of 20%, regardless of the concentration increase or the presence of calcium. It also shows 40% inhibition of the hemolytic activity promoted by the complement pathways and possess only a minor role in the induction of edema and pain in rat. The chain is Thrombin-like enzyme BpirSP41 from Bothrops pirajai (Piraja's lancehead).